Reading from the N-terminus, the 345-residue chain is Fructose-1,6-bisphosphatase class 1 (345 aa).

Residues glutamate 90, aspartate 109, leucine 111, and aspartate 112 each contribute to the Mg(2+) site. Substrate contacts are provided by residues 112–115 (DGSS) and asparagine 200. Residue glutamate 272 coordinates Mg(2+).

The protein belongs to the FBPase class 1 family. In terms of assembly, homotetramer. Requires Mg(2+) as cofactor.

The protein localises to the cytoplasm. The enzyme catalyses beta-D-fructose 1,6-bisphosphate + H2O = beta-D-fructose 6-phosphate + phosphate. Its pathway is carbohydrate biosynthesis; gluconeogenesis. The chain is Fructose-1,6-bisphosphatase class 1 from Bradyrhizobium diazoefficiens (strain JCM 10833 / BCRC 13528 / IAM 13628 / NBRC 14792 / USDA 110).